The chain runs to 415 residues: E3 ubiquitin-protein ligase RNF135 (415 aa).

The RING-type zinc-finger motif lies at 21-67 (CIICQGLLDWPTTLPCGHSFCLQCLKDLWVSKRAGVDSCPWACPICR). Residues 181–206 (TFSASQKKIQEILRDLEKIQETLQGS) are a coiled coil. Residues 228–415 (PDQRYPVSRK…LTPGNYLEIL (188 aa)) enclose the B30.2/SPRY domain.

Homodimer. Interacts (homodimer) with RIGI (double-stranded RNA-bound oligomeric form); involved in both RIGI ubiquitination, oligomerization into filaments associated with viral RNAs and the bridging of these filaments. Interacts with UBE2D3 and UBE2N; E2 ubiquitin ligases involved in RNF135-mediated ubiquitination of RIGI and activation of the RIG-I signaling pathway. Interacts with PCBP2.

Its subcellular location is the cytoplasm. The protein localises to the stress granule. It catalyses the reaction S-ubiquitinyl-[E2 ubiquitin-conjugating enzyme]-L-cysteine + [acceptor protein]-L-lysine = [E2 ubiquitin-conjugating enzyme]-L-cysteine + N(6)-ubiquitinyl-[acceptor protein]-L-lysine.. The protein operates within protein modification; protein ubiquitination. Its function is as follows. E2-dependent E3 ubiquitin-protein ligase that functions as a RIGI coreceptor in the sensing of viral RNAs in cell cytoplasm and the activation of the antiviral innate immune response. Together with the UBE2D3, UBE2N and UB2V1 E2 ligases, catalyzes the 'Lys-63'-linked polyubiquitination of RIGI oligomerized on viral RNAs, an essential step in the activation of the RIG-I signaling pathway. Through a ubiquitin-independent parallel mechanism, which consists in bridging RIGI filaments forming on longer viral RNAs, further activates the RIG-I signaling pathway. This second mechanism that synergizes with the ubiquitin-dependent one would thereby allow an RNA length-dependent regulation of the RIG-I signaling pathway. Associated with the E2 ligase UBE2N, also constitutively synthesizes unanchored 'Lys-63'-linked polyubiquitin chains that may also activate the RIG-I signaling pathway. The polypeptide is E3 ubiquitin-protein ligase RNF135 (Rattus norvegicus (Rat)).